The primary structure comprises 88 residues: Thioredoxin-2 (88 aa).

Positions 2-88 constitute a Thioredoxin domain; sequence SRVIHISSNE…YRNGAKVSEF (87 aa). Residues Cys-31 and Cys-34 each act as nucleophile in the active site. Cys-31 and Cys-34 are joined by a disulfide.

This sequence belongs to the thioredoxin family.

Participates in various redox reactions through the reversible oxidation of its active center dithiol to a disulfide and catalyzes dithiol-disulfide exchange reactions. The protein is Thioredoxin-2 (trxB) of Dictyostelium discoideum (Social amoeba).